Reading from the N-terminus, the 193-residue chain is Thioredoxin reductase-like selenoprotein T1a (193 aa).

An N-terminal signal peptide occupies residues 1 to 21 (MRWLPFSALLLWALCLHSASA). Residues 44–47 (CVSU) constitute a cross-link (cysteinyl-selenocysteine (Cys-Sec)). Residue selenocysteine 47 is a non-standard amino acid, selenocysteine. Residues 83 to 101 (IASFLSMFKLLLIGVIILG) traverse the membrane as a helical segment.

This sequence belongs to the SelWTH family. Selenoprotein T subfamily. Post-translationally, may contain a selenide-sulfide bond between Cys-44 and Sec-47. This bond is speculated to serve as redox-active pair. Expressed in embryonic olfactory vesicles and the photoreceptor cell layer of the embryonic retina. Low level in embryonic epiphysis.

The protein resides in the endoplasmic reticulum membrane. The enzyme catalyses [thioredoxin]-dithiol + NADP(+) = [thioredoxin]-disulfide + NADPH + H(+). Functionally, selenoprotein with thioredoxin reductase-like oxidoreductase activity. This chain is Thioredoxin reductase-like selenoprotein T1a, found in Danio rerio (Zebrafish).